The sequence spans 217 residues: 7-cyano-7-deazaguanine synthase (217 aa).

An ATP-binding site is contributed by 10 to 20 (FSGGQDSTTCL). Cysteine 185, cysteine 194, cysteine 197, and cysteine 200 together coordinate Zn(2+).

Belongs to the QueC family. In terms of assembly, homodimer. Requires Zn(2+) as cofactor.

It carries out the reaction 7-carboxy-7-deazaguanine + NH4(+) + ATP = 7-cyano-7-deazaguanine + ADP + phosphate + H2O + H(+). The protein operates within purine metabolism; 7-cyano-7-deazaguanine biosynthesis. In terms of biological role, catalyzes the ATP-dependent conversion of 7-carboxy-7-deazaguanine (CDG) to 7-cyano-7-deazaguanine (preQ(0)). In Streptococcus thermophilus (strain CNRZ 1066), this protein is 7-cyano-7-deazaguanine synthase.